Reading from the N-terminus, the 554-residue chain is 2-succinyl-5-enolpyruvyl-6-hydroxy-3-cyclohexene-1-carboxylate synthase (554 aa).

Belongs to the TPP enzyme family. MenD subfamily. Homodimer. The cofactor is Mg(2+). Mn(2+) is required as a cofactor. It depends on thiamine diphosphate as a cofactor.

The catalysed reaction is isochorismate + 2-oxoglutarate + H(+) = 5-enolpyruvoyl-6-hydroxy-2-succinyl-cyclohex-3-ene-1-carboxylate + CO2. It participates in quinol/quinone metabolism; 1,4-dihydroxy-2-naphthoate biosynthesis; 1,4-dihydroxy-2-naphthoate from chorismate: step 2/7. It functions in the pathway quinol/quinone metabolism; menaquinone biosynthesis. Functionally, catalyzes the thiamine diphosphate-dependent decarboxylation of 2-oxoglutarate and the subsequent addition of the resulting succinic semialdehyde-thiamine pyrophosphate anion to isochorismate to yield 2-succinyl-5-enolpyruvyl-6-hydroxy-3-cyclohexene-1-carboxylate (SEPHCHC). The polypeptide is 2-succinyl-5-enolpyruvyl-6-hydroxy-3-cyclohexene-1-carboxylate synthase (Lactococcus lactis subsp. cremoris (strain SK11)).